The following is a 448-amino-acid chain: MSSDVSGTESGSESGPESVPEPVPEPGPEPESEPGPGPAPGPGPGPAPGPGPGLGREPGQRYQPCQLCPEHGKPLSWFCLSERRPVCATCAGFGGRCHRHRIRRAEEHAEELRNKIVDHCEKLQLQSAGITKYVAEVLQGKNQKAMIMANATREVIIQRLSLVRCLCESEEQRLLEQVHSEEERAHQCILTQRAHWDDKLRKLDSLRTSMVDMLTHLNDLQLIQMEQEILERAEEAEGILEPQESEKLSFNEKCAWSPLLTQLWATSVLGSLSGMEDVLIDERTVGPLLNLSEDRKTLTFNAKKSKVCSDDPERFDHWPNALAVNAFQTGLHAWAVNVKHSCAYKVGVASAQLPRKGSGSDCRLGHNAFSWVFSRYDQEFCFSHNGNHEPLALLRCPTQLGLLLDLQAGELIFYEPASGTVLHIHRESFPHRLFPVFAVADQVISIVC.

The span at 1–18 shows a compositional bias: low complexity; it reads MSSDVSGTESGSESGPES. The tract at residues 1–58 is disordered; it reads MSSDVSGTESGSESGPESVPEPVPEPGPEPESEPGPGPAPGPGPGPAPGPGPGLGREP. Positions 19–51 are enriched in pro residues; sequence VPEPVPEPGPEPESEPGPGPAPGPGPGPAPGPG. The B box-type zinc finger occupies 63 to 111; the sequence is QPCQLCPEHGKPLSWFCLSERRPVCATCAGFGGRCHRHRIRRAEEHAEE. The B30.2/SPRY domain maps to 257 to 448; sequence SPLLTQLWAT…VADQVISIVC (192 aa).

Interacts with TRPV5 and TRPV6. Interacts with YWHAZ/14-3-3 protein zeta. As to expression, predominantly expressed in testis. Expressed in brain at low levels.

Its subcellular location is the cytoplasm. The protein resides in the membrane. May regulate epithelial calcium transport by inhibiting TRPV5 activity. In Rattus norvegicus (Rat), this protein is B box and SPRY domain-containing protein (Bspry).